Consider the following 178-residue polypeptide: 2-C-methyl-D-erythritol 2,4-cyclodiphosphate synthase (178 aa).

Residues Asp-24, His-26, and His-61 each contribute to the a divalent metal cation site. Residue Asp-24–His-26 coordinates 4-CDP-2-C-methyl-D-erythritol 2-phosphate. A 4-CDP-2-C-methyl-D-erythritol 2-phosphate-binding site is contributed by Thr-150–Glu-153.

The protein belongs to the IspF family. As to quaternary structure, homotrimer. It depends on a divalent metal cation as a cofactor.

The catalysed reaction is 4-CDP-2-C-methyl-D-erythritol 2-phosphate = 2-C-methyl-D-erythritol 2,4-cyclic diphosphate + CMP. Its pathway is isoprenoid biosynthesis; isopentenyl diphosphate biosynthesis via DXP pathway; isopentenyl diphosphate from 1-deoxy-D-xylulose 5-phosphate: step 4/6. Its function is as follows. Involved in the biosynthesis of isopentenyl diphosphate (IPP) and dimethylallyl diphosphate (DMAPP), two major building blocks of isoprenoid compounds. Catalyzes the conversion of 4-diphosphocytidyl-2-C-methyl-D-erythritol 2-phosphate (CDP-ME2P) to 2-C-methyl-D-erythritol 2,4-cyclodiphosphate (ME-CPP) with a corresponding release of cytidine 5-monophosphate (CMP). The protein is 2-C-methyl-D-erythritol 2,4-cyclodiphosphate synthase of Chlamydia muridarum (strain MoPn / Nigg).